The sequence spans 77 residues: MARVCQVTGKGPMVGNNVSHANNKTKRRFMPNLQYRRFWVESENRWVRLRITSAGLRLIDKKGIDAILVDLRARGEI.

It belongs to the bacterial ribosomal protein bL28 family.

The protein is Large ribosomal subunit protein bL28 of Polaromonas sp. (strain JS666 / ATCC BAA-500).